An 889-amino-acid polypeptide reads, in one-letter code: MDARGGGGRPGESPGATPAPGPPPPPPPAPPQQQPPPPPPPAPPPGPGPAPPQHPPRAEALPPEAADEGGPRGRLRSRDSSCGRPGTPGAASTAKGSPNGECGRGEPQCSPAGPEGPARGPKVSFSCRGAASGPAPGPGPAEEAGSEEAGPAGEPRGSQASFMQRQFGALLQPGVNKFSLRMFGSQKAVEREQERVKSAGAWIIHPYSDFRFYWDFTMLLFMVGNLIIIPVGITFFKDETTAPWIVFNVVSDTFFLMDLVLNFRTGIVIEDNTEIILDPEKIKKKYLRTWFVVDFVSSIPVDYIFLIVEKGIDSEVYKTARALRIVRFTKILSLLRLLRLSRLIRYIHQWEEIFHMTYDLASAVMRICNLISMMLLLCHWDGCLQFLVPMLQDFPRNCWVSINGMVNHSWSELYSFALFKAMSHMLCIGYGRQAPESMTDIWLTMLSMIVGATCYAMFIGHATALIQSLDSSRRQYQEKYKQVEQYMSFHKLPADFRQKIHDYYEHRYQGKMFDEDSILGELNGPLREEIVNFNCRKLVASMPLFANADPNFVTAMLTKLKFEVFQPGDYIIREGTIGKKMYFIQHGVVSVLTKGNKEMKLSDGSYFGEICLLTRGRRTASVRADTYCRLYSLSVDNFNEVLEEYPMMRRAFETVAIDRLDRIGKKNSILLHKVQHDLNSGVFNNQENAIIQEIVKYDREMVQQAELGQRVGLFPPPPPPPQVTSAIATLQQAAAMSFCPQVARPLVGPLALGSPRLVRRPPPGPAPAAASPGPPPPASPPGAPASPRAPRTSPYGGLPAAPLAGPALPARRLSRASRPLSASQPSLPHGAPGPAASTRPASSSTPRLGPTPAARAAAPSPDRRDSASPGAAGGLDPQDSARSRLSSNL.

Residues 1-10 are compositionally biased toward gly residues; sequence MDARGGGGRP. The disordered stretch occupies residues 1-159; that stretch reads MDARGGGGRP…GPAGEPRGSQ (159 aa). The Cytoplasmic segment spans residues 1-215; that stretch reads MDARGGGGRP…PYSDFRFYWD (215 aa). A compositionally biased stretch (pro residues) spans 17 to 55; it reads TPAPGPPPPPPPAPPQQQPPPPPPPAPPPGPGPAPPQHP. Over residues 129 to 155 the composition is skewed to low complexity; that stretch reads GAASGPAPGPGPAEEAGSEEAGPAGEP. Ser-146 and Ser-161 each carry phosphoserine. An involved in subunit assembly region spans residues 158 to 209; that stretch reads SQASFMQRQFGALLQPGVNKFSLRMFGSQKAVEREQERVKSAGAWIIHPYSD. A helical membrane pass occupies residues 216 to 236; the sequence is FTMLLFMVGNLIIIPVGITFF. Topologically, residues 237 to 240 are extracellular; the sequence is KDET. The helical transmembrane segment at 241-261 threads the bilayer; the sequence is TAPWIVFNVVSDTFFLMDLVL. Topologically, residues 262 to 288 are cytoplasmic; sequence NFRTGIVIEDNTEIILDPEKIKKKYLR. The helical transmembrane segment at 289–309 threads the bilayer; it reads TWFVVDFVSSIPVDYIFLIVE. The Extracellular portion of the chain corresponds to 310 to 317; the sequence is KGIDSEVY. Residues 318-338 traverse the membrane as a helical; Voltage-sensor segment; the sequence is KTARALRIVRFTKILSLLRLL. The Cytoplasmic segment spans residues 339–369; sequence RLSRLIRYIHQWEEIFHMTYDLASAVMRICN. Residues 370 to 390 form a helical membrane-spanning segment; sequence LISMMLLLCHWDGCLQFLVPM. Topologically, residues 391-413 are extracellular; the sequence is LQDFPRNCWVSINGMVNHSWSEL. Asn-407 is a glycosylation site (N-linked (GlcNAc...) asparagine). The segment at residues 414–435 is an intramembrane region (pore-forming); sequence YSFALFKAMSHMLCIGYGRQAP. Residues 436–440 lie on the Extracellular side of the membrane; that stretch reads ESMTD. A helical membrane pass occupies residues 441–461; sequence IWLTMLSMIVGATCYAMFIGH. Over 462 to 889 the chain is Cytoplasmic; the sequence is ATALIQSLDS…SARSRLSSNL (428 aa). The 3',5'-cyclic AMP site is built by Met-599, Gly-608, Glu-609, Ile-610, Cys-611, Arg-618, Thr-619, and Arg-659. Position 668 is a phosphoserine; by PKG/PRKG2 (Ser-668). Ser-754 bears the Phosphoserine mark. The tract at residues 754-889 is disordered; the sequence is SPRLVRRPPP…SARSRLSSNL (136 aa). The residue at position 756 (Arg-756) is an Omega-N-methylarginine. Residues 760–784 show a composition bias toward pro residues; that stretch reads RPPPGPAPAAASPGPPPPASPPGAP. A phosphoserine mark is found at Ser-771, Ser-779, Ser-786, Ser-866, and Ser-868. Residues 785–860 are compositionally biased toward low complexity; the sequence is ASPRAPRTSP…TPAARAAAPS (76 aa).

This sequence belongs to the potassium channel HCN family. In terms of assembly, homotetramer. The channel is composed of a homo- or heterotetrameric complex of pore-forming subunits. Heterotetramer with HCN1. Forms an obligate 4:4 complex with accessory subunit PEX5L. Interacts with KCNE2. In terms of processing, phosphorylation at Ser-668 by PRKG2 shifts the voltage-dependence to more negative voltages, hence counteracting the stimulatory effect of cGMP on gating. S-palmitoylated. Post-translationally, N-glycosylated; required for cell surface trafficking of HCN2. Highly expressed throughout the brain. Detected at low levels in heart.

Its subcellular location is the cell membrane. The enzyme catalyses Na(+)(in) = Na(+)(out). It catalyses the reaction K(+)(in) = K(+)(out). The catalysed reaction is NH4(+)(in) = NH4(+)(out). Activated by cAMP, and at 10-100 times higher concentrations, also by cGMP. cAMP binding causes a conformation change that leads to the assembly of an active tetramer and channel opening. Binding of cAMP removes a tonic inhibition conferred by cyclic nucleotide-binding domain (CNBD) on channel opening. Channel activity is modulated by intracellular chloride ions and pH; acidic pH shifts the activation to more negative voltages. Inhibited by extracellular cesium ions. Its function is as follows. Hyperpolarization-activated ion channel that is permeable to sodium and potassium ions. Displays lower selectivity for K(+) over Na(+) ions. Contributes to the native pacemaker currents in heart (If) and in neurons (Ih). Can also transport ammonium in the distal nephron. Involved in the initiation of neuropathic pain in sensory neurons. This is Potassium/sodium hyperpolarization-activated cyclic nucleotide-gated channel 2 from Homo sapiens (Human).